The chain runs to 172 residues: Small ribosomal subunit protein uS5 (172 aa).

The 64-residue stretch at 17–80 (LREKMIAVNR…DEARRKMIKV (64 aa)) folds into the S5 DRBM domain.

Belongs to the universal ribosomal protein uS5 family. In terms of assembly, part of the 30S ribosomal subunit. Contacts proteins S4 and S8.

With S4 and S12 plays an important role in translational accuracy. Functionally, located at the back of the 30S subunit body where it stabilizes the conformation of the head with respect to the body. The chain is Small ribosomal subunit protein uS5 from Polynucleobacter asymbioticus (strain DSM 18221 / CIP 109841 / QLW-P1DMWA-1) (Polynucleobacter necessarius subsp. asymbioticus).